The chain runs to 389 residues: Phospho-N-acetylmuramoyl-pentapeptide-transferase (389 aa).

10 consecutive transmembrane segments (helical) span residues 25–45, 73–93, 97–117, 135–155, 190–210, 222–242, 259–279, 287–307, 311–331, and 366–386; these read RAVMATITALLIGLVCGPAVI, TMGGVLILLGIAVATLLWADL, FIWIVMLVTFGFGVIGWVDDY, FWQSVIGLFAAVYLAFSVSEA, ISYPLGVWGFIVLTYLVIVGA, GLVIMPVVLVGASLGVFAYVM, AGELLIFCSAMGGAGLAFLWF, FMGDVGALALGGALGTVAVIV, IVLFIMGGIFVAETLSVMLQV, and QVVVRFWIITLMLCLFGLSTL.

The protein belongs to the glycosyltransferase 4 family. MraY subfamily. It depends on Mg(2+) as a cofactor.

It is found in the cell inner membrane. The catalysed reaction is UDP-N-acetyl-alpha-D-muramoyl-L-alanyl-gamma-D-glutamyl-meso-2,6-diaminopimeloyl-D-alanyl-D-alanine + di-trans,octa-cis-undecaprenyl phosphate = di-trans,octa-cis-undecaprenyl diphospho-N-acetyl-alpha-D-muramoyl-L-alanyl-D-glutamyl-meso-2,6-diaminopimeloyl-D-alanyl-D-alanine + UMP. It functions in the pathway cell wall biogenesis; peptidoglycan biosynthesis. Its function is as follows. Catalyzes the initial step of the lipid cycle reactions in the biosynthesis of the cell wall peptidoglycan: transfers peptidoglycan precursor phospho-MurNAc-pentapeptide from UDP-MurNAc-pentapeptide onto the lipid carrier undecaprenyl phosphate, yielding undecaprenyl-pyrophosphoryl-MurNAc-pentapeptide, known as lipid I. In Paraburkholderia xenovorans (strain LB400), this protein is Phospho-N-acetylmuramoyl-pentapeptide-transferase.